A 134-amino-acid chain; its full sequence is Small ribosomal subunit protein uS11 (134 aa).

It belongs to the universal ribosomal protein uS11 family. In terms of assembly, part of the 30S ribosomal subunit. Interacts with proteins S7 and S18. Binds to IF-3.

Its function is as follows. Located on the platform of the 30S subunit, it bridges several disparate RNA helices of the 16S rRNA. Forms part of the Shine-Dalgarno cleft in the 70S ribosome. In Frankia casuarinae (strain DSM 45818 / CECT 9043 / HFP020203 / CcI3), this protein is Small ribosomal subunit protein uS11.